The primary structure comprises 326 residues: MAQRVQLTATVSENQLGQRLDQALAEMFPDYSRSRIKEWILDQRVLVNGKVCDKPKEKVLGGEQVAINAEIEEEARFEPQDIPLDIVYEDEDIIIINKPRDLVVHPGAGNPDGTVLNALLHYYPPIADVPRAGIVHRLDKDTTGLMVVAKTVPAQTRLVESLQRREITREYEAVAIGHMTAGGTVDEPISRHPTKRTHMAVHPMGKPAVTHYRIMEHFRVHTRLRLRLETGRTHQIRVHMAHITHPLVGDPVYGGRPRPPKGASEAFISTLRKFDRQALHATMLRLYHPISGIEMEWHAPIPQDMVELIEVMRADFEEHKDEVDWL.

An S4 RNA-binding domain is found at 18–91 (QRLDQALAEM…IPLDIVYEDE (74 aa)). The active site involves aspartate 139.

It belongs to the pseudouridine synthase RluA family. As to quaternary structure, in late stage pre-50S ribosomal subunit interacts with ObgE and DarP(YjgA).

The protein resides in the cytoplasm. The enzyme catalyses uridine(1911/1915/1917) in 23S rRNA = pseudouridine(1911/1915/1917) in 23S rRNA. Its function is as follows. Responsible for synthesis of pseudouridine from uracil at positions 1911, 1915 and 1917 in 23S ribosomal RNA. Other positions are not modified. Uridine isomerization occurs as a late step during the assembly of the large ribosomal subunit. Member of a network of 50S ribosomal subunit biogenesis factors (ObgE, RluD, RsfS and DarP(YjgA)) which assembles along the 30S-50S interface, allowing 23S rRNA modification and preventing incorrect 23S rRNA structures from forming. The sequence is that of Ribosomal large subunit pseudouridine synthase D from Escherichia coli (strain K12).